Here is a 189-residue protein sequence, read N- to C-terminus: UPF0200 protein Smar_1234 (189 aa).

An ATP-binding site is contributed by 10–17 (GMPGAGKS).

The protein belongs to the UPF0200 family.

This Staphylothermus marinus (strain ATCC 43588 / DSM 3639 / JCM 9404 / F1) protein is UPF0200 protein Smar_1234.